The primary structure comprises 104 residues: UPF0145 protein Hlac_1015 (104 aa).

It belongs to the UPF0145 family.

In Halorubrum lacusprofundi (strain ATCC 49239 / DSM 5036 / JCM 8891 / ACAM 34), this protein is UPF0145 protein Hlac_1015.